The following is a 258-amino-acid chain: UDP-N-acetylenolpyruvoylglucosamine reductase (258 aa).

Arginine 142 is a catalytic residue. The active-site Proton donor is serine 184. Glutamate 254 is a catalytic residue.

The protein belongs to the MurB family. It depends on FAD as a cofactor.

Its subcellular location is the cytoplasm. The catalysed reaction is UDP-N-acetyl-alpha-D-muramate + NADP(+) = UDP-N-acetyl-3-O-(1-carboxyvinyl)-alpha-D-glucosamine + NADPH + H(+). The protein operates within cell wall biogenesis; peptidoglycan biosynthesis. Its function is as follows. Cell wall formation. This is UDP-N-acetylenolpyruvoylglucosamine reductase from Campylobacter jejuni (strain RM1221).